Here is a 272-residue protein sequence, read N- to C-terminus: 3-methyl-2-oxobutanoate hydroxymethyltransferase (272 aa).

Mg(2+) contacts are provided by D51 and D90. 3-methyl-2-oxobutanoate is bound by residues 51 to 52, D90, and K119; that span reads DS. E121 lines the Mg(2+) pocket. The active-site Proton acceptor is the E188.

The protein belongs to the PanB family. Homodecamer; pentamer of dimers. It depends on Mg(2+) as a cofactor.

It localises to the cytoplasm. The catalysed reaction is 3-methyl-2-oxobutanoate + (6R)-5,10-methylene-5,6,7,8-tetrahydrofolate + H2O = 2-dehydropantoate + (6S)-5,6,7,8-tetrahydrofolate. Its pathway is cofactor biosynthesis; (R)-pantothenate biosynthesis; (R)-pantoate from 3-methyl-2-oxobutanoate: step 1/2. Its function is as follows. Catalyzes the reversible reaction in which hydroxymethyl group from 5,10-methylenetetrahydrofolate is transferred onto alpha-ketoisovalerate to form ketopantoate. The protein is 3-methyl-2-oxobutanoate hydroxymethyltransferase of Dechloromonas aromatica (strain RCB).